The chain runs to 141 residues: Hemoglobin subunit alpha-1 (141 aa).

In terms of domain architecture, Globin spans 1 to 141 (VLSEGNKKAI…VTYQLSSLYR (141 aa)). H59 lines the O2 pocket. H88 is a heme b binding site.

Belongs to the globin family. Heterotetramer of two alpha chains and two beta chains. As to expression, red blood cells.

Functionally, involved in oxygen transport from the lung to the various peripheral tissues. This chain is Hemoglobin subunit alpha-1, found in Torpedo marmorata (Marbled electric ray).